We begin with the raw amino-acid sequence, 141 residues long: Large ribosomal subunit protein uL11 (141 aa).

The protein belongs to the universal ribosomal protein uL11 family. Part of the ribosomal stalk of the 50S ribosomal subunit. Interacts with L10 and the large rRNA to form the base of the stalk. L10 forms an elongated spine to which L12 dimers bind in a sequential fashion forming a multimeric L10(L12)X complex. One or more lysine residues are methylated.

In terms of biological role, forms part of the ribosomal stalk which helps the ribosome interact with GTP-bound translation factors. This Alkaliphilus oremlandii (strain OhILAs) (Clostridium oremlandii (strain OhILAs)) protein is Large ribosomal subunit protein uL11.